We begin with the raw amino-acid sequence, 205 residues long: Probable GTP-binding protein EngB (205 aa).

Positions 21-196 (QVPEVAFAGR…VHEVSKCVKE (176 aa)) constitute an EngB-type G domain. Residues 29 to 36 (GRSNVGKS), 56 to 60 (GSTRQ), 74 to 77 (DLPG), 141 to 144 (TKID), and 172 to 177 (IIGTSS) contribute to the GTP site. Serine 36 and threonine 58 together coordinate Mg(2+).

This sequence belongs to the TRAFAC class TrmE-Era-EngA-EngB-Septin-like GTPase superfamily. EngB GTPase family. Mg(2+) serves as cofactor.

Functionally, necessary for normal cell division and for the maintenance of normal septation. The sequence is that of Probable GTP-binding protein EngB from Anaplasma marginale (strain Florida).